Consider the following 619-residue polypeptide: Sodium-dependent dopamine transporter (619 aa).

At 1-56 (MSKSKCSVGPMSSVVAPAKEPNAVGPREVELILVKEQNGVQLTNSTLINPPQTPVE) the chain is on the cytoplasmic side. A discontinuously helical membrane pass occupies residues 57-95 (VQERETWSKKIDFLLSVIGFAVDLANVWRFPYLCYKNGG). Residues Gly75, Ala77, Val78, Asp79, and Asn82 each coordinate Na(+). Asp79 contributes to the dopamine binding site. A run of 2 helical transmembrane segments spans residues 96–127 (GAFLVPYLLFMVIAGMPLFYMELALGQFNREG) and 128–171 (AAGV…FSSF). The dopamine site is built by Ser149 and Gly153. Residues 172–235 (TMDLPWIHCN…SRGIDDLGPP (64 aa)) are Extracellular-facing. Cysteines 180 and 189 form a disulfide. Residues Asn181, Asn188, Asn196, and Asn204 are each glycosylated (N-linked (GlcNAc...) asparagine). Helical transmembrane passes span 236 to 255 (RWQLTACLVLVIVLLYFSLW) and 256 to 286 (KGVKTSGKVVWITATMPYVVLTALLLRGVTL). Over 287 to 305 (PGAMDGIRAYLSVDFYRLC) the chain is Extracellular. Residues 306-334 (EASVWIDAATQVCFSLGVGFGVLIAFSSY) form a discontinuously helical membrane-spanning segment. A chloride-binding site is contributed by Gln316. Residue Phe319 coordinates dopamine. Na(+) contacts are provided by Ser320 and Asn352. Residue Ser320 coordinates chloride. A helical membrane pass occupies residues 335 to 375 (NKFTNNCYRDAIITTSINSLTSFSSGFVVFSFLGYMAQKHN). Ser356 provides a ligand contact to chloride. At 376 to 399 (VPIRDVATDGPGLIFIIYPEAIAT) the chain is on the extracellular side. The next 3 helical transmembrane spans lie at 400-441 (LPLS…QLLH), 442-465 (RHRELFTLGIVLATFLLSLFCVTN), and 466-498 (GGIYVFTLLDHFAAGTSILFGVLIEAIGVAWFY). Leu417, Asp420, and Ser421 together coordinate Na(+). Ser421 and Ala422 together coordinate dopamine. Over 499-515 (GVQQFSDDIKQMTGQRP) the chain is Cytoplasmic. A helical transmembrane segment spans residues 516 to 541 (NLYWRLCWKLVSPCFLLYVVVVSIVT). Residues 542–552 (FRPPHYGAYIF) are Extracellular-facing. The chain crosses the membrane as a helical span at residues 553–582 (PDWANALGWIIATSSMAMVPIYATYKFCSL). Residues 560–589 (GWIIATSSMAMVPIYATYKFCSLPGSFREK) form an interaction with TGFB1I1 region. Over 583–619 (PGSFREKLAYAITPEKDRQLVDRGEVRQFTLRHWLLV) the chain is Cytoplasmic.

Belongs to the sodium:neurotransmitter symporter (SNF) (TC 2.A.22) family. SLC6A3 subfamily. Monomer. Homooligomer; disulfide-linked. Interacts with PRKCABP and TGFB1I1. Interacts (via N-terminus) with SYNGR3 (via N-terminus). Interacts with SLC18A2. Interacts with TOR1A (ATP-bound); TOR1A regulates SLC6A3 subcellular location. Interacts with alpha-synuclein/SNCA. Interacts with SEPTIN4. As to expression, found in the substantia nigra and ventral tegmental dopamine neurons, in fibers of the medial forebrain bundle ascending into the striatum, and within dense fiber networks and varicosities in the dorsal and ventral striatum (at protein level). Lower expression in the cortex (at protein level). Absent from the corpus callosum. Expressed throughout the retina at postnatal day 8.

The protein resides in the cell membrane. Its subcellular location is the cell projection. The protein localises to the neuron projection. It localises to the axon. The enzyme catalyses dopamine(out) + chloride(out) + Na(+)(out) = dopamine(in) + chloride(in) + Na(+)(in). The catalysed reaction is (R)-noradrenaline(out) + chloride(out) + Na(+)(out) = (R)-noradrenaline(in) + chloride(in) + Na(+)(in). It carries out the reaction dopamine(out) + chloride(out) + 2 Na(+)(out) = dopamine(in) + chloride(in) + 2 Na(+)(in). With respect to regulation, inhibited by amphetamine, bupropion, cocaine and ritalin. Inhibited by zinc ions. Its function is as follows. Mediates sodium- and chloride-dependent transport of dopamine. Also mediates sodium- and chloride-dependent transport of norepinephrine (also known as noradrenaline). Regulator of light-dependent retinal hyaloid vessel regression, downstream of OPN5 signaling. This Mus musculus (Mouse) protein is Sodium-dependent dopamine transporter (Slc6a3).